A 460-amino-acid chain; its full sequence is Elongation factor 1-alpha (460 aa).

Residue Gly2 is modified to N,N,N-trimethylglycine. Lys3 is modified (N6,N6-dimethyllysine; alternate). An N6-methyllysine; alternate modification is found at Lys3. The region spanning 6 to 241 (KTHINVVVIG…DSIEPPKRPT (236 aa)) is the tr-type G domain. A G1 region spans residues 15 to 22 (GHVDSGKS). 15–22 (GHVDSGKS) serves as a coordination point for GTP. Lys31 is subject to N6-methyllysine. The tract at residues 71 to 75 (GITID) is G2. Lys80 is modified (N6,N6,N6-trimethyllysine). The segment at 92–95 (DAPG) is G3. GTP is bound by residues 92 to 96 (DAPGH) and 154 to 157 (NKMD). A G4 region spans residues 154–157 (NKMD). The G5 stretch occupies residues 193–195 (SGF). N6,N6-dimethyllysine; alternate is present on Lys317. Lys317 is modified (N6-methyllysine; alternate). Lys391 is modified (N6-methyllysine).

Belongs to the TRAFAC class translation factor GTPase superfamily. Classic translation factor GTPase family. EF-Tu/EF-1A subfamily.

The protein resides in the cytoplasm. In terms of biological role, this protein promotes the GTP-dependent binding of aminoacyl-tRNA to the A-site of ribosomes during protein biosynthesis. The polypeptide is Elongation factor 1-alpha (TEF) (Podospora anserina (Pleurage anserina)).